A 610-amino-acid chain; its full sequence is UvrABC system protein C (610 aa).

The GIY-YIG domain maps to 16–94 (SQPGVYRMYD…IKLYQPRYNV (79 aa)). Residues 204-239 (DQVLTQLIARMEKASQDLAFEEAARIRDQIQAVRRV) form the UVR domain.

The protein belongs to the UvrC family. Interacts with UvrB in an incision complex.

The protein localises to the cytoplasm. The UvrABC repair system catalyzes the recognition and processing of DNA lesions. UvrC both incises the 5' and 3' sides of the lesion. The N-terminal half is responsible for the 3' incision and the C-terminal half is responsible for the 5' incision. The polypeptide is UvrABC system protein C (Salmonella paratyphi A (strain ATCC 9150 / SARB42)).